Reading from the N-terminus, the 900-residue chain is Zinc finger protein 574 (900 aa).

3 consecutive C2H2-type zinc fingers follow at residues 16–38, 76–98, and 126–148; these read YVCS…QNSH, YQCL…QELH, and YECV…RQTH. Phosphoserine is present on serine 164. The C2H2-type 4 zinc finger occupies 213 to 235; the sequence is YKCSECSQLFQMPADFLEHQATH. A compositionally biased stretch (low complexity) spans 244–254; that stretch reads AEPATQQETQV. Positions 244 to 306 are disordered; sequence AEPATQQETQ…RRNNSGESGG (63 aa). A compositionally biased stretch (basic and acidic residues) spans 273–290; the sequence is HSYELRNELRNGEAIGRD. Serine 301 is modified (phosphoserine). 10 consecutive C2H2-type zinc fingers follow at residues 312–334, 339–361, 367–389, 395–416, 469–492, 498–520, 526–548, 554–576, 582–604, and 610–633; these read LFCS…LRSH, FKCP…LGDH, FLCV…RRAH, HSCP…RRTH, YRCL…RFVH, HKCS…LRTH, FPCP…RLTH, YRCG…RLVH, YRCQ…RYHH, and YKCR…LVIH. A C2H2-type 15; degenerate zinc finger spans residues 639-662; the sequence is YRCSSCGAAFPSSLRLREHRCAAA. The segment at 670-692 adopts a C2H2-type 16 zinc-finger fold; that stretch reads FECGTCGKKVGSAARLQAHEAAH. The tract at residues 690–741 is disordered; the sequence is AAHAAAGPGEVLAKEPPAPRASRATRTPVAPSPTALSGTTSAAPAAPARRRG. Serine 721 is subject to Phosphoserine. The span at 721-736 shows a compositional bias: low complexity; the sequence is SPTALSGTTSAAPAAP. Phosphothreonine is present on threonine 728. 4 C2H2-type zinc fingers span residues 742 to 764, 770 to 792, 798 to 820, and 826 to 848; these read PECS…RRIH, YPCP…RRLH, FACE…RRIH, and YSCP…RKTH. An Asymmetric dimethylarginine modification is found at arginine 836.

It belongs to the krueppel C2H2-type zinc-finger protein family.

Its subcellular location is the nucleus. In terms of biological role, may be involved in transcriptional regulation. This Mus musculus (Mouse) protein is Zinc finger protein 574 (Znf574).